The primary structure comprises 275 residues: NH(3)-dependent NAD(+) synthetase (275 aa).

46-53 (GISGGQDS) contributes to the ATP binding site. D52 contacts Mg(2+). Deamido-NAD(+) is bound at residue R140. T160 is an ATP binding site. A Mg(2+)-binding site is contributed by E165. Deamido-NAD(+) is bound by residues K173 and D180. ATP-binding residues include K189 and T211. 260–261 (HK) is a binding site for deamido-NAD(+).

This sequence belongs to the NAD synthetase family. Homodimer.

The enzyme catalyses deamido-NAD(+) + NH4(+) + ATP = AMP + diphosphate + NAD(+) + H(+). It functions in the pathway cofactor biosynthesis; NAD(+) biosynthesis; NAD(+) from deamido-NAD(+) (ammonia route): step 1/1. Functionally, catalyzes the ATP-dependent amidation of deamido-NAD to form NAD. Uses ammonia as a nitrogen source. This chain is NH(3)-dependent NAD(+) synthetase, found in Salmonella enteritidis PT4 (strain P125109).